A 438-amino-acid chain; its full sequence is GTPase Der (438 aa).

2 EngA-type G domains span residues 4 to 168 (PIVA…PKGY) and 177 to 352 (IRIA…TNYS). Residues 10–17 (GRPNVGKS), 57–61 (DTGGI), 120–123 (NKID), 183–190 (GKPNVGKS), 230–234 (DTAGL), and 295–298 (NKWD) contribute to the GTP site. The KH-like domain maps to 353–437 (KRISTGVLND…GIKMEFRERK (85 aa)).

This sequence belongs to the TRAFAC class TrmE-Era-EngA-EngB-Septin-like GTPase superfamily. EngA (Der) GTPase family. As to quaternary structure, associates with the 50S ribosomal subunit.

Functionally, GTPase that plays an essential role in the late steps of ribosome biogenesis. The protein is GTPase Der of Clostridium tetani (strain Massachusetts / E88).